A 351-amino-acid chain; its full sequence is Dihydroorotate dehydrogenase (quinone) (351 aa).

FMN contacts are provided by residues 65–69 (AGLDK) and threonine 89. Residue lysine 69 participates in substrate binding. 114–118 (NRLGF) contacts substrate. Residues asparagine 150 and asparagine 183 each coordinate FMN. Asparagine 183 is a substrate binding site. Residue serine 186 is the Nucleophile of the active site. Residue asparagine 188 participates in substrate binding. Lysine 228 and threonine 256 together coordinate FMN. 257 to 258 (NT) contributes to the substrate binding site. Residues glycine 279, glycine 308, and 329–330 (YT) each bind FMN.

It belongs to the dihydroorotate dehydrogenase family. Type 2 subfamily. Monomer. Requires FMN as cofactor.

The protein resides in the cell membrane. It catalyses the reaction (S)-dihydroorotate + a quinone = orotate + a quinol. It functions in the pathway pyrimidine metabolism; UMP biosynthesis via de novo pathway; orotate from (S)-dihydroorotate (quinone route): step 1/1. In terms of biological role, catalyzes the conversion of dihydroorotate to orotate with quinone as electron acceptor. In Acidovorax sp. (strain JS42), this protein is Dihydroorotate dehydrogenase (quinone).